The chain runs to 250 residues: Golgi SNAP receptor complex member 1 (250 aa).

Ala2 carries the post-translational modification N-acetylalanine. At 2-229 (AAGTSNYWED…QRINLRKRRD (228 aa)) the chain is on the cytoplasmic side. Residues 10–30 (EDLRKQARQLENELDLKLVSF) are a coiled coil. The disordered stretch occupies residues 39-59 (HSSARDGRRDRYSSDTTPLLN). The segment covering 41-51 (SARDGRRDRYS) has biased composition (basic and acidic residues). Residues 70-93 (MAIEIEQLLARLTGINDKMAEYTS) adopt a coiled-coil conformation. The residue at position 141 (Ser141) is a Phosphoserine. The chain crosses the membrane as a helical; Anchor for type IV membrane protein span at residues 230 to 250 (SLILGGVIGVCTILLLLYAFH).

It belongs to the GOSR1 family. As to quaternary structure, component of several multiprotein Golgi SNARE complexes. Identified in a SNARE complex with BET1, STX5 and YKT6, in a SNARE complex with BET1L, STX5 and YKT6, in a SNARE complex with STX5, GOSR2, SEC22B and BET1, and in complex with STX5 and COG3. Interacts with GABARAPL2.

The protein resides in the golgi apparatus membrane. Its function is as follows. Involved in transport from the ER to the Golgi apparatus as well as in intra-Golgi transport. It belongs to a super-family of proteins called t-SNAREs or soluble NSF (N-ethylmaleimide-sensitive factor) attachment protein receptor. May play a protective role against hydrogen peroxide induced cytotoxicity under glutathione depleted conditions in neuronal cells by regulating the intracellular ROS levels via inhibition of p38 MAPK (MAPK11, MAPK12, MAPK13 and MAPK14). Participates in docking and fusion stage of ER to cis-Golgi transport. Plays an important physiological role in VLDL-transport vesicle-Golgi fusion and thus in VLDL delivery to the hepatic cis-Golgi. The sequence is that of Golgi SNAP receptor complex member 1 (GOSR1) from Bos taurus (Bovine).